We begin with the raw amino-acid sequence, 408 residues long: Peptidase T (408 aa).

His-78 lines the Zn(2+) pocket. The active site involves Asp-80. A Zn(2+)-binding site is contributed by Asp-141. Residue Glu-175 is the Proton acceptor of the active site. Zn(2+)-binding residues include Glu-176, Asp-198, and His-380.

The protein belongs to the peptidase M20B family. Zn(2+) is required as a cofactor.

Its subcellular location is the cytoplasm. The enzyme catalyses Release of the N-terminal residue from a tripeptide.. Functionally, cleaves the N-terminal amino acid of tripeptides. The chain is Peptidase T from Clostridium botulinum (strain Loch Maree / Type A3).